A 357-amino-acid chain; its full sequence is 3-dehydroquinate synthase (357 aa).

Residues Gly-104–Asp-108, Thr-128–Thr-129, Lys-141, and Phe-168–Thr-171 contribute to the NAD(+) site. The Zn(2+) site is built by Glu-183, His-243, and His-260.

Belongs to the sugar phosphate cyclases superfamily. Dehydroquinate synthase family. Requires Co(2+) as cofactor. The cofactor is Zn(2+). NAD(+) serves as cofactor.

Its subcellular location is the cytoplasm. The catalysed reaction is 7-phospho-2-dehydro-3-deoxy-D-arabino-heptonate = 3-dehydroquinate + phosphate. The protein operates within metabolic intermediate biosynthesis; chorismate biosynthesis; chorismate from D-erythrose 4-phosphate and phosphoenolpyruvate: step 2/7. Its function is as follows. Catalyzes the conversion of 3-deoxy-D-arabino-heptulosonate 7-phosphate (DAHP) to dehydroquinate (DHQ). The sequence is that of 3-dehydroquinate synthase from Streptococcus pyogenes serotype M49 (strain NZ131).